A 40-amino-acid polypeptide reads, in one-letter code: Dolichyl-diphosphooligosaccharide--protein glycosyltransferase subunit 4 (40 aa).

Topologically, residues 1–4 (MITD) are lumenal. The helical transmembrane segment at 5-25 (VQLAIFSNVLGVFLFLLVVAY) threads the bilayer. Residues 26-40 (HYINANTGKIGPKAK) lie on the Cytoplasmic side of the membrane.

It belongs to the OST4 family. In terms of assembly, component of the oligosaccharyltransferase (OST) complex.

It localises to the endoplasmic reticulum membrane. Its function is as follows. Subunit of the oligosaccharyl transferase (OST) complex that catalyzes the initial transfer of a defined glycan (Glc(3)Man(9)GlcNAc(2) in eukaryotes) from the lipid carrier dolichol-pyrophosphate to an asparagine residue within an Asn-X-Ser/Thr consensus motif in nascent polypeptide chains, the first step in protein N-glycosylation. N-glycosylation occurs cotranslationally and the complex associates with the Sec61 complex at the channel-forming translocon complex that mediates protein translocation across the endoplasmic reticulum (ER). All subunits are required for a maximal enzyme activity. The protein is Dolichyl-diphosphooligosaccharide--protein glycosyltransferase subunit 4 of Drosophila willistoni (Fruit fly).